The sequence spans 974 residues: Translation initiation factor IF-2 (974 aa).

The tract at residues 31–376 is disordered; sequence FVKSASSTVE…APAVGGVRLP (346 aa). Positions 52–68 are enriched in low complexity; sequence PSAKSADSAARPAAKPG. Over residues 83–96 the composition is skewed to pro residues; the sequence is GPRPGPKPAAPAPA. The segment covering 97–133 has biased composition (low complexity); that stretch reads APAAAAPAATPAAQAPAPAAPAASTATPAAPASNAPK. Residues 134 to 147 are compositionally biased toward pro residues; that stretch reads PGRPTPAAPAPAAP. Composition is skewed to low complexity over residues 148–166 and 179–191; these read AAPAAPAAASTPAAPSTGA and RVGNNPYSSAPAE. Pro residues-rich tracts occupy residues 195–210 and 253–266; these read PRPAPGAPRPGAPRPA and RPSPGSMPPRPNPG. Over residues 267-277 the composition is skewed to low complexity; it reads AMPARSARPAP. Gly residues predominate over residues 279–332; that stretch reads GRPGRPGGAPGGRPGGGGGGYRGGGAPGAGAGAPGGGAPAGGFRGRPGGGGRPG. The segment covering 349 to 358 has biased composition (basic residues); sequence RRGRKSKRQK. The tr-type G domain maps to 470-641; sequence SRPPVVTVMG…AVLLTADAAL (172 aa). The tract at residues 479–486 is G1; it reads GHVDHGKT. 479-486 is a GTP binding site; it reads GHVDHGKT. The segment at 504–508 is G2; the sequence is GITQH. The tract at residues 529–532 is G3; it reads DTPG. Residues 529–533 and 583–586 each bind GTP; these read DTPGH and NKID. The tract at residues 583–586 is G4; it reads NKID. Residues 619–621 form a G5 region; the sequence is SAK.

The protein belongs to the TRAFAC class translation factor GTPase superfamily. Classic translation factor GTPase family. IF-2 subfamily.

The protein localises to the cytoplasm. In terms of biological role, one of the essential components for the initiation of protein synthesis. Protects formylmethionyl-tRNA from spontaneous hydrolysis and promotes its binding to the 30S ribosomal subunits. Also involved in the hydrolysis of GTP during the formation of the 70S ribosomal complex. The sequence is that of Translation initiation factor IF-2 from Rhodococcus opacus (strain B4).